The primary structure comprises 445 residues: Exodeoxyribonuclease 7 large subunit (445 aa).

The protein belongs to the XseA family. In terms of assembly, heterooligomer composed of large and small subunits.

It is found in the cytoplasm. The enzyme catalyses Exonucleolytic cleavage in either 5'- to 3'- or 3'- to 5'-direction to yield nucleoside 5'-phosphates.. Bidirectionally degrades single-stranded DNA into large acid-insoluble oligonucleotides, which are then degraded further into small acid-soluble oligonucleotides. The sequence is that of Exodeoxyribonuclease 7 large subunit from Shewanella pealeana (strain ATCC 700345 / ANG-SQ1).